Here is a 75-residue protein sequence, read N- to C-terminus: Large ribosomal subunit protein bL28 (75 aa).

Belongs to the bacterial ribosomal protein bL28 family.

The chain is Large ribosomal subunit protein bL28 from Buchnera aphidicola subsp. Acyrthosiphon pisum (strain APS) (Acyrthosiphon pisum symbiotic bacterium).